The sequence spans 647 residues: DNA mismatch repair protein MutL (647 aa).

This sequence belongs to the DNA mismatch repair MutL/HexB family.

Functionally, this protein is involved in the repair of mismatches in DNA. It is required for dam-dependent methyl-directed DNA mismatch repair. May act as a 'molecular matchmaker', a protein that promotes the formation of a stable complex between two or more DNA-binding proteins in an ATP-dependent manner without itself being part of a final effector complex. This is DNA mismatch repair protein MutL from Bacillus cereus (strain 03BB102).